Reading from the N-terminus, the 203-residue chain is V-type ATP synthase subunit D (203 aa).

This sequence belongs to the V-ATPase D subunit family.

Its function is as follows. Produces ATP from ADP in the presence of a proton gradient across the membrane. The polypeptide is V-type ATP synthase subunit D (Streptococcus pneumoniae (strain CGSP14)).